The following is a 206-amino-acid chain: Putative type I restriction enzyme MpnIIP endonuclease subunit C-terminal part (206 aa).

Its function is as follows. The C-terminal section of a putative type I restriction enzyme that if reconstituted might recognize 5'-GAN(7)TAY-3' and cleave a random distance away. Subunit R is required for both nuclease and ATPase activities, but not for modification. In Mycoplasma pneumoniae (strain ATCC 29342 / M129 / Subtype 1) (Mycoplasmoides pneumoniae), this protein is Putative type I restriction enzyme MpnIIP endonuclease subunit C-terminal part.